The chain runs to 296 residues: Putative S-adenosyl-L-methionine-dependent methyltransferase MAV_4764 (296 aa).

Residues Asp-121 and 150 to 151 (DL) contribute to the S-adenosyl-L-methionine site.

The protein belongs to the UPF0677 family.

Exhibits S-adenosyl-L-methionine-dependent methyltransferase activity. The polypeptide is Putative S-adenosyl-L-methionine-dependent methyltransferase MAV_4764 (Mycobacterium avium (strain 104)).